Consider the following 877-residue polypeptide: Alanine--tRNA ligase (877 aa).

Residues His-566, His-570, Cys-668, and His-672 each contribute to the Zn(2+) site.

The protein belongs to the class-II aminoacyl-tRNA synthetase family. Zn(2+) serves as cofactor.

It is found in the cytoplasm. It carries out the reaction tRNA(Ala) + L-alanine + ATP = L-alanyl-tRNA(Ala) + AMP + diphosphate. Catalyzes the attachment of alanine to tRNA(Ala) in a two-step reaction: alanine is first activated by ATP to form Ala-AMP and then transferred to the acceptor end of tRNA(Ala). Also edits incorrectly charged Ser-tRNA(Ala) and Gly-tRNA(Ala) via its editing domain. The chain is Alanine--tRNA ligase from Staphylococcus aureus (strain USA300 / TCH1516).